Reading from the N-terminus, the 401-residue chain is Aspartate aminotransferase, mitochondrial (401 aa).

T19 is modified (phosphothreonine). N6-acetyllysine is present on K30. G36 is a binding site for substrate. Residue K44 is modified to N6-acetyllysine; alternate. An N6-succinyllysine; alternate modification is found at K44. K53 is modified (N6-acetyllysine). Position 61 is an N6-acetyllysine; alternate (K61). An N6-succinyllysine; alternate modification is found at K61. The residue at position 67 (Y67) is a 3'-nitrotyrosine; alternate. At Y67 the chain carries Phosphotyrosine; alternate. Residues K78, K93, and K130 each carry the N6-acetyllysine; alternate modification. An N6-succinyllysine; alternate mark is found at K78, K93, and K130. Residue W133 coordinates substrate. K156 carries the N6-acetyllysine; alternate modification. K156 bears the N6-succinyllysine; alternate mark. N186 lines the substrate pocket. The residue at position 198 (K198) is an N6-succinyllysine. K205 is subject to N6-acetyllysine. 2 positions are modified to N6-acetyllysine; alternate: K250 and K267. K250 is subject to N6-(pyridoxal phosphate)lysine; alternate. K267 bears the N6-succinyllysine; alternate mark. K273 is subject to N6-acetyllysine. K280 is modified (N6-acetyllysine; alternate). An N6-succinyllysine; alternate modification is found at K280. R284 is modified (asymmetric dimethylarginine). K309 carries the post-translational modification N6-acetyllysine; alternate. N6-succinyllysine; alternate is present on K309. N6-acetyllysine is present on K316. An N6-acetyllysine; alternate modification is found at K334. K334 carries the post-translational modification N6-succinyllysine; alternate. 2 positions are modified to N6-acetyllysine: K335 and K358. 2 positions are modified to N6-acetyllysine; alternate: K367 and K375. 2 positions are modified to N6-succinyllysine; alternate: K367 and K375. R378 contributes to the substrate binding site.

It belongs to the class-I pyridoxal-phosphate-dependent aminotransferase family. In terms of assembly, homodimer. Pyridoxal 5'-phosphate serves as cofactor.

Its subcellular location is the mitochondrion matrix. It localises to the cell membrane. It carries out the reaction L-aspartate + 2-oxoglutarate = oxaloacetate + L-glutamate. The enzyme catalyses L-kynurenine + 2-oxoglutarate = kynurenate + L-glutamate + H2O. In terms of biological role, catalyzes the irreversible transamination of the L-tryptophan metabolite L-kynurenine to form kynurenic acid (KA). As a member of the malate-aspartate shuttle, it has a key role in the intracellular NAD(H) redox balance. Is important for metabolite exchange between mitochondria and cytosol, and for amino acid metabolism. Facilitates cellular uptake of long-chain free fatty acids. The sequence is that of Aspartate aminotransferase, mitochondrial (GOT2) from Equus caballus (Horse).